The following is a 172-amino-acid chain: Protein nemuri (172 aa).

Residues Met1–Ala25 form the signal peptide. The tract at residues Arg27–Ala172 is disordered. Composition is skewed to basic and acidic residues over residues Arg35–Ser50, Asp58–Thr90, and Thr97–Ala108. Positions Asp45 to Arg74 form a coiled coil. Positions Arg109–Ala172 are enriched in basic residues.

Detected in the brain where it accumulates in the dorsal fan-shaped body following sleep deprivation (at protein level). Expressed in the adult body.

The protein resides in the secreted. Antimicrobial protein which is essential for the homeostatic regulation of sleep. Promotes sleep following sleep deprivation or bacterial infection and increases survival following bacterial infection. Likely to promote survival to bacterial infection in two ways; by contributing to the innate immune response and by promoting sleep during sickness to aid recovery. The polypeptide is Protein nemuri (Drosophila melanogaster (Fruit fly)).